The chain runs to 180 residues: Cytidylate kinase (180 aa).

Gly7–Thr15 provides a ligand contact to ATP.

The protein belongs to the cytidylate kinase family. Type 2 subfamily.

It is found in the cytoplasm. The catalysed reaction is CMP + ATP = CDP + ADP. It catalyses the reaction dCMP + ATP = dCDP + ADP. The chain is Cytidylate kinase from Methanosarcina acetivorans (strain ATCC 35395 / DSM 2834 / JCM 12185 / C2A).